A 114-amino-acid polypeptide reads, in one-letter code: Putative pterin-4-alpha-carbinolamine dehydratase (114 aa).

This sequence belongs to the pterin-4-alpha-carbinolamine dehydratase family.

It carries out the reaction (4aS,6R)-4a-hydroxy-L-erythro-5,6,7,8-tetrahydrobiopterin = (6R)-L-erythro-6,7-dihydrobiopterin + H2O. The sequence is that of Putative pterin-4-alpha-carbinolamine dehydratase from Methylococcus capsulatus (strain ATCC 33009 / NCIMB 11132 / Bath).